The sequence spans 276 residues: Large ribosomal subunit protein uL2 (276 aa).

Positions 221-276 (RGSAMNPNDHPHGGGEGRAPIGRKSPMTPWGKKARGVKTRDRKKASNALIIRRRTK) are disordered. Basic residues predominate over residues 252–276 (KKARGVKTRDRKKASNALIIRRRTK).

It belongs to the universal ribosomal protein uL2 family. As to quaternary structure, part of the 50S ribosomal subunit. Forms a bridge to the 30S subunit in the 70S ribosome.

Functionally, one of the primary rRNA binding proteins. Required for association of the 30S and 50S subunits to form the 70S ribosome, for tRNA binding and peptide bond formation. It has been suggested to have peptidyltransferase activity; this is somewhat controversial. Makes several contacts with the 16S rRNA in the 70S ribosome. In Onion yellows phytoplasma (strain OY-M), this protein is Large ribosomal subunit protein uL2.